A 434-amino-acid chain; its full sequence is D-amino acid dehydrogenase (434 aa).

Residue 3–17 (VIVLGSGVIGTTTAY) coordinates FAD.

Belongs to the DadA oxidoreductase family. It depends on FAD as a cofactor.

It carries out the reaction a D-alpha-amino acid + A + H2O = a 2-oxocarboxylate + AH2 + NH4(+). Oxidative deamination of D-amino acids. The sequence is that of D-amino acid dehydrogenase from Bordetella bronchiseptica (strain ATCC BAA-588 / NCTC 13252 / RB50) (Alcaligenes bronchisepticus).